A 354-amino-acid polypeptide reads, in one-letter code: Membrane progestin receptor alpha-B (354 aa).

Residues 1-76 (MATVVMEQIG…LTLFQRHNES (76 aa)) are Cytoplasmic-facing. A helical membrane pass occupies residues 77–97 (VNVWTHLLASLIILVKFQELS). Over 98-110 (ETVDFLRDPHAQP) the chain is Extracellular. Residues 111-131 (MFILLLAAFTYLGCSALAHLL) form a helical membrane-spanning segment. Residues 132–141 (SAKSEISHYT) are Cytoplasmic-facing. A helical transmembrane segment spans residues 142 to 162 (FYFLDYVGVAVYQYGSALAHF). Residues 163 to 175 (YYVVEEEWHAQVR) lie on the Extracellular side of the membrane. The chain crosses the membrane as a helical span at residues 176–196 (TFFLPASAFLAWLSCTGCCYG). The Cytoplasmic segment spans residues 197–244 (KYASPKLPKFVHKLFQVVPSGLAYCLDISPVLHRIYRCYSSEHWCADQ). Residues 245 to 265 (AVVYHCYQVLFFLISAYFFSY) form a helical membrane-spanning segment. The Extracellular segment spans residues 266-277 (PHPERWFPGRCD). A helical membrane pass occupies residues 278 to 298 (FIGQGHQIFHVFLVLCTLVQI). Over 299 to 318 (EAVRLDYTERRRLYEHLHGD) the chain is Cytoplasmic. Residues 319 to 339 (LAHDAVALFIFTACCSALTAF) traverse the membrane as a helical segment. Residues 340–354 (YVRKRVKTYLEEKQE) are Extracellular-facing.

Belongs to the ADIPOR family.

Its subcellular location is the cell membrane. Its function is as follows. Steroid membrane receptor. Signals upon progestin binding, resulting in rapid activation of MAPK and down-regulation of adenylyl cyclase activity. Interacts with steroids with varying degrees of affinity, showing specificity for activation by the maturation-inducing steroid (MIS) 4-pregnen-17,20beta-diol-3-one (17,20beta-DHP). Capable of mediating progestin-induced oocyte maturation. The chain is Membrane progestin receptor alpha-B (paqr7b) from Danio rerio (Zebrafish).